A 153-amino-acid chain; its full sequence is Transcriptional repressor NrdR (153 aa).

A zinc finger lies at 3-34 (CPFCNHLHDKVVDSRESKEGDAIRRRRECLEC). Residues 49–139 (YMVVKKDGRR…VYRDFQDEQA (91 aa)) form the ATP-cone domain.

Belongs to the NrdR family. The cofactor is Zn(2+).

Functionally, negatively regulates transcription of bacterial ribonucleotide reductase nrd genes and operons by binding to NrdR-boxes. The protein is Transcriptional repressor NrdR of Solibacter usitatus (strain Ellin6076).